Here is a 226-residue protein sequence, read N- to C-terminus: PKHD-type hydroxylase LHK_00496 (226 aa).

The 101-residue stretch at 78-178 (RFFPPLFNRY…RVASFMWIQS (101 aa)) folds into the Fe2OG dioxygenase domain. 3 residues coordinate Fe cation: histidine 96, aspartate 98, and histidine 159. Residue arginine 169 participates in 2-oxoglutarate binding.

It depends on Fe(2+) as a cofactor. L-ascorbate serves as cofactor.

In Laribacter hongkongensis (strain HLHK9), this protein is PKHD-type hydroxylase LHK_00496.